The chain runs to 449 residues: Phosphoribosylamine--glycine ligase (449 aa).

An ATP-grasp domain is found at 112–325 (RELMEKYDIP…IVTLHASIAE (214 aa)). 139 to 202 (IDELGKPVAV…EEKCVGEEYT (64 aa)) provides a ligand contact to ATP. Residues Q283, E295, and N297 each contribute to the Mg(2+) site. Mn(2+) contacts are provided by Q283, E295, and N297.

The protein belongs to the GARS family. It depends on Mg(2+) as a cofactor. Mn(2+) is required as a cofactor.

It catalyses the reaction 5-phospho-beta-D-ribosylamine + glycine + ATP = N(1)-(5-phospho-beta-D-ribosyl)glycinamide + ADP + phosphate + H(+). It participates in purine metabolism; IMP biosynthesis via de novo pathway; N(1)-(5-phospho-D-ribosyl)glycinamide from 5-phospho-alpha-D-ribose 1-diphosphate: step 2/2. In Methanopyrus kandleri (strain AV19 / DSM 6324 / JCM 9639 / NBRC 100938), this protein is Phosphoribosylamine--glycine ligase.